A 377-amino-acid polypeptide reads, in one-letter code: Stimulator of interferon genes protein 7 (377 aa).

4 consecutive transmembrane segments (helical) span residues 30–50 (TAAITSAIIGVSSGAMLFLAV), 57–77 (THFLVFTAALLTLSFAFGELL), 106–126 (FTFDHGGCISLTAMFSALILC), and 141–161 (FAILFSVNCLVVPQLLFLVGL).

The protein belongs to the STING family.

Its subcellular location is the membrane. Its function is as follows. Facilitator of innate immune signaling that acts as a sensor of second messenger signals produced by cyclic GMP-AMP synthase-like receptors (cGLRs) and promotes the production of type I interferon. Innate immune response is triggered in response to nucleotides from viruses and bacteria delivered to the cytoplasm. Acts by binding cyclic dinucleotides: recognizes and binds a large variety of 2'-3'- and 3'-3' linked cyclic dinucleotides (2'-3'-cGAMP, 3'-3'-cGAMP, 2',3'-cUAMP, 3',3'-cUAMP and/or 3',3'-c-di-GMP) second messengers produced by cGLRs in response to nucleotides in the cytosol, such as double-stranded RNA (dsRNA). Upon binding to cyclic dinucleotides, oligomerizes and promotes the recruitment and subsequent activation of the transcription factor IRF3 to induce expression of type I interferon. The protein is Stimulator of interferon genes protein 7 of Stylophora pistillata (Smooth cauliflower coral).